Consider the following 243-residue polypeptide: Ribonuclease PH (243 aa).

Residues Arg91 and 129-131 (GTR) contribute to the phosphate site.

The protein belongs to the RNase PH family. Homohexameric ring arranged as a trimer of dimers.

It catalyses the reaction tRNA(n+1) + phosphate = tRNA(n) + a ribonucleoside 5'-diphosphate. Its function is as follows. Phosphorolytic 3'-5' exoribonuclease that plays an important role in tRNA 3'-end maturation. Removes nucleotide residues following the 3'-CCA terminus of tRNAs; can also add nucleotides to the ends of RNA molecules by using nucleoside diphosphates as substrates, but this may not be physiologically important. Probably plays a role in initiation of 16S rRNA degradation (leading to ribosome degradation) during starvation. This Burkholderia thailandensis (strain ATCC 700388 / DSM 13276 / CCUG 48851 / CIP 106301 / E264) protein is Ribonuclease PH.